A 2079-amino-acid polypeptide reads, in one-letter code: Non-reducing polyketide synthase Dhc5 (2079 aa).

The N-terminal acylcarrier protein transacylase domain (SAT) stretch occupies residues 9–246; it reads LLFGDVTDPW…DELNIHALQH (238 aa). Residues 366–798 enclose the Ketosynthase family 3 (KS3) domain; the sequence is NDGIAIVGMA…GGNACLLLED (433 aa). Catalysis depends on for beta-ketoacyl synthase activity residues cysteine 543, histidine 678, and histidine 717. The segment at 895 to 1199 is malonyl-CoA:ACP transacylase (MAT) domain; that stretch reads VFVFTGQGSH…MTHSLQPKTS (305 aa). The active-site For acyl/malonyl transferase activity is serine 986. The N-terminal hotdog fold stretch occupies residues 1268–1414; sequence EPLISTCAQY…DPTRSQVEWD (147 aa). The 317-residue stretch at 1268–1584 folds into the PKS/mFAS DH domain; that stretch reads EPLISTCAQY…YQELPRATWK (317 aa). The segment at 1304–1581 is product template (PT) domain; sequence MDGHKMQGIG…DIRYQELPRA (278 aa). The interval 1435-1584 is C-terminal hotdog fold; it reads RGHRMQPEVF…YQELPRATWK (150 aa). A disordered region spans residues 1613–1639; it reads RELQQPSSATVPAQETTIDEPEQQEGE. Positions 1615 to 1628 are enriched in polar residues; it reads LQQPSSATVPAQET. Residues 1641-1718 form the Carrier domain; sequence AAGARLFNAI…DLRKEFRANE (78 aa). Position 1678 is an O-(pantetheine 4'-phosphoryl)serine (serine 1678). The interval 1721 to 1784 is disordered; it reads VENPRFSATP…EQKRPVKIDD (64 aa). Residues 1727–1757 show a composition bias toward low complexity; that stretch reads SATPSSAEASIPSSPSSLAHPMSDSASSLSP. The span at 1758-1784 shows a compositional bias: basic and acidic residues; sequence SDREEALPLERQSMTKREQKRPVKIDD. The interval 1812–2057 is thioesterase (TE) domain; it reads ADGTGTIATY…LSVAGDHLDL (246 aa). Histidine 2064 acts as the For thioesterase activity in catalysis.

Its pathway is mycotoxin biosynthesis. In terms of biological role, highly reducing polyketide synthase; part of the gene cluster that mediates the biosynthesis of 10,11-dehydrocurvularin, a prevalent fungal phytotoxin with heat shock response and immune-modulatory activities. The highly reducing polyketide synthase Dhc3 is responsible for biosynthesis up to the tetraketide stage. The non-reducing polyketide synthase Dhc5 then conducts four additional chain extension cycles, producing the unreduced part of the nascent octaketide from C-1 to C-8 in 10,11-dehydrocurvularin. This chain is Non-reducing polyketide synthase Dhc5, found in Alternaria cinerariae.